Reading from the N-terminus, the 596-residue chain is Arginine--tRNA ligase (596 aa).

Residues 135-145 carry the 'HIGH' region motif; the sequence is ANPTGPIHIGG. The interval 227-249 is disordered; sequence PRVDGGADQDGNPLGEGDSEQRE.

It belongs to the class-I aminoacyl-tRNA synthetase family. As to quaternary structure, monomer.

The protein resides in the cytoplasm. The enzyme catalyses tRNA(Arg) + L-arginine + ATP = L-arginyl-tRNA(Arg) + AMP + diphosphate. The polypeptide is Arginine--tRNA ligase (Bifidobacterium adolescentis (strain ATCC 15703 / DSM 20083 / NCTC 11814 / E194a)).